Here is a 655-residue protein sequence, read N- to C-terminus: D-xylonate dehydratase YagF (655 aa).

It belongs to the IlvD/Edd family.

It catalyses the reaction D-xylonate = 2-dehydro-3-deoxy-D-arabinonate + H2O. Catalyzes the dehydration of D-xylonic acid to form 2-dehydro-3-deoxy-D-pentonate. The protein is D-xylonate dehydratase YagF (yagF) of Escherichia coli (strain K12).